Reading from the N-terminus, the 37-residue chain is Cytochrome b6-f complex subunit 7 (37 aa).

A helical membrane pass occupies residues Ala11–Leu29.

The protein belongs to the PetM family. In terms of assembly, the 4 large subunits of the cytochrome b6-f complex are cytochrome b6, subunit IV (17 kDa polypeptide, PetD), cytochrome f and the Rieske protein, while the 4 small subunits are PetG, PetL, PetM and PetN. The complex functions as a dimer.

The protein localises to the cellular thylakoid membrane. Its function is as follows. Component of the cytochrome b6-f complex, which mediates electron transfer between photosystem II (PSII) and photosystem I (PSI), cyclic electron flow around PSI, and state transitions. This Rippkaea orientalis (strain PCC 8801 / RF-1) (Cyanothece sp. (strain PCC 8801)) protein is Cytochrome b6-f complex subunit 7.